The chain runs to 419 residues: Dual specificity protein phosphatase 7 (419 aa).

The tract at residues 1–47 is disordered; sequence MKNQLRGPPARAHMSTSGAAAAGGTRAGSEPGAGSGSGAGTGAGAAT. Residues 10 to 29 show a composition bias toward low complexity; it reads ARAHMSTSGAAAAGGTRAGS. The span at 31 to 47 shows a compositional bias: gly residues; sequence PGAGSGSGAGTGAGAAT. Residues 68 to 187 form the Rhodanese domain; that stretch reads GGASLLLLDC…FQTEYSEHCE (120 aa). Residues 216–240 are disordered; it reads CSDGESDRELPSSATESDGSPVPSS. Residues 227–240 show a composition bias toward polar residues; the sequence is SSATESDGSPVPSS. The region spanning 244 to 387 is the Tyrosine-protein phosphatase domain; the sequence is FPVQILPYLY…LLDFERTLGL (144 aa). The active-site Phosphocysteine intermediate is C331. A substrate-binding site is contributed by 331-337; it reads CLAGISR.

The protein belongs to the protein-tyrosine phosphatase family. Non-receptor class dual specificity subfamily. In terms of assembly, interacts with MAPK1/ERK2; the interaction enhances DUSP7 phosphatase activity. Strongly expressed in liver. Expressed at significantly higher levels in malignant hematopoietic cells than in corresponding non-malignant cells.

It is found in the cytoplasm. The catalysed reaction is O-phospho-L-tyrosyl-[protein] + H2O = L-tyrosyl-[protein] + phosphate. The enzyme catalyses O-phospho-L-seryl-[protein] + H2O = L-seryl-[protein] + phosphate. It carries out the reaction O-phospho-L-threonyl-[protein] + H2O = L-threonyl-[protein] + phosphate. Its activity is regulated as follows. Strongly inhibited by sodium orthovanadate. In terms of biological role, dual specificity protein phosphatase. Shows high activity towards MAPK1/ERK2. Also has lower activity towards MAPK14 and MAPK8. In arrested oocytes, plays a role in meiotic resumption. Promotes nuclear envelope breakdown and activation of the CDK1/Cyclin-B complex in oocytes, probably by dephosphorylating and inactivating the conventional protein kinase C (cPKC) isozyme PRKCB. May also inactivate PRKCA and/or PRKCG. Also important in oocytes for normal chromosome alignment on the metaphase plate and progression to anaphase, where it might regulate activity of the spindle-assembly checkpoint (SAC) complex. The chain is Dual specificity protein phosphatase 7 from Homo sapiens (Human).